The primary structure comprises 150 residues: Anti-CBASS protein Acb1 (150 aa).

Residue Tyr-11 coordinates 3',3'-cGAMP. Tyr-11 is a binding site for 3',3'-cUAMP. Residues His-43 and Thr-45 contribute to the active site. Phe-73 is a binding site for 3',3'-cGAMP. Phe-73 serves as a coordination point for 3',3'-cUAMP. Catalysis depends on residues His-112 and Thr-114. 3',3'-cGAMP contacts are provided by Glu-142 and Trp-148. 2 residues coordinate 3',3'-cUAMP: Glu-142 and Trp-148.

This sequence belongs to the anti-CBASS protein Acb1 family.

It catalyses the reaction 3',3'-cUAMP + H2O = U[3'-5']pAp[3'] + H(+). The enzyme catalyses 3',3',3'-c-tri-AMP + H2O = A[3'-5']pA[3'-5']pAp[3'] + H(+). It carries out the reaction 3',3',3'-cAAG + H2O = G[3'-5']pA[3'-5']pAp[3'] + H(+). The catalysed reaction is 3',3',3'-cAAG + H2O = A[3'-5']pG[3'-5']pAp[3'] + H(+). It catalyses the reaction 3',3'-cGAMP + H2O = G[3'-5']pAp[3'] + H(+). Counteracts the host CBASS antiviral defense system. Phosphodiesterase that enables metal-independent hydrolysis of the host cyclic di- and trinucleotide CBASS signals such as 3'3'-cGAMP, 3'3'cUA, and 3'3'3'-cAAA. Does not cleave cGG or cA4. Besides evasion of the CBASS system, might also enable evasion of the type III CRISPR systems that use cA3 signals. This chain is Anti-CBASS protein Acb1, found in Acinetobacter sp. (Acinetobacter phage 42).